We begin with the raw amino-acid sequence, 182 residues long: MSIEEEDTNKITCTQDFLHQYFVTERVSIQFGLNNKTVKRINKDEFDKAVNCIMSWTNYPKPGLKRTASTYLLSNSFKKSATVSLPFILGDPVCMPKRVESNNNDTCLLYSDTLYDDPLIQRNDQAGDEIEDEFSFTLLRSEVNEIRPISSSSTAQILQSDYSALMYERQASNGSIFQFSSP.

As to quaternary structure, interacts with REC114 and SPO11.

Potential transcriptional regulator that is required to activate expression of a number of early meiotic genes including HOP1. The protein is Meiotic recombination protein REC104 (REC104) of Saccharomyces cerevisiae (strain ATCC 204508 / S288c) (Baker's yeast).